The primary structure comprises 736 residues: Factor of DNA methylation 4 (736 aa).

Basic and acidic residues-rich tracts occupy residues 80-90 (RKYLRPRERPR) and 144-167 (DSGR…SNED). Residues 80–167 (RKYLRPRERP…KPDPFFSNED (88 aa)) are disordered. A coiled-coil region spans residues 360–597 (TLVSNLENTL…RSMRELTTRA (238 aa)).

Functionally, acts in association with FDM3 and FDM5 for RNA-directed DNA methylation (RdDM). The chain is Factor of DNA methylation 4 from Arabidopsis thaliana (Mouse-ear cress).